Consider the following 120-residue polypeptide: Glycine cleavage system H protein (120 aa).

The Lipoyl-binding domain maps to 17–99 (VATVGITAHA…QGGGWLYRLK (83 aa)). Residue Lys-58 is modified to N6-lipoyllysine.

This sequence belongs to the GcvH family. In terms of assembly, the glycine cleavage system is composed of four proteins: P, T, L and H. (R)-lipoate serves as cofactor.

Functionally, the glycine cleavage system catalyzes the degradation of glycine. The H protein shuttles the methylamine group of glycine from the P protein to the T protein. In Methylorubrum extorquens (strain CM4 / NCIMB 13688) (Methylobacterium extorquens), this protein is Glycine cleavage system H protein.